A 234-amino-acid polypeptide reads, in one-letter code: Ubiquinone biosynthesis O-methyltransferase (234 aa).

S-adenosyl-L-methionine contacts are provided by R39, G59, D80, and M124.

The protein belongs to the methyltransferase superfamily. UbiG/COQ3 family.

It carries out the reaction a 3-demethylubiquinol + S-adenosyl-L-methionine = a ubiquinol + S-adenosyl-L-homocysteine + H(+). The enzyme catalyses a 3-(all-trans-polyprenyl)benzene-1,2-diol + S-adenosyl-L-methionine = a 2-methoxy-6-(all-trans-polyprenyl)phenol + S-adenosyl-L-homocysteine + H(+). The protein operates within cofactor biosynthesis; ubiquinone biosynthesis. O-methyltransferase that catalyzes the 2 O-methylation steps in the ubiquinone biosynthetic pathway. The polypeptide is Ubiquinone biosynthesis O-methyltransferase (Aliivibrio fischeri (strain MJ11) (Vibrio fischeri)).